The primary structure comprises 190 residues: Peptidyl-tRNA hydrolase (190 aa).

F14 contacts tRNA. The active-site Proton acceptor is H19. Residues M64, N66, and N112 each contribute to the tRNA site.

It belongs to the PTH family. In terms of assembly, monomer.

It is found in the cytoplasm. The enzyme catalyses an N-acyl-L-alpha-aminoacyl-tRNA + H2O = an N-acyl-L-amino acid + a tRNA + H(+). Its function is as follows. Hydrolyzes ribosome-free peptidyl-tRNAs (with 1 or more amino acids incorporated), which drop off the ribosome during protein synthesis, or as a result of ribosome stalling. Catalyzes the release of premature peptidyl moieties from peptidyl-tRNA molecules trapped in stalled 50S ribosomal subunits, and thus maintains levels of free tRNAs and 50S ribosomes. This Staphylococcus aureus (strain bovine RF122 / ET3-1) protein is Peptidyl-tRNA hydrolase.